The sequence spans 262 residues: Apolipoprotein A-Ia (262 aa).

A signal peptide spans 1–18 (MKFVALALTLLLALGSQA). The 3 X approximate tandem repeats stretch occupies residues 32-63 (YKAAALVYLNQVKDQAEKALDNLDGTDYEQYK). A run of 2 repeats spans residues 64 to 85 (LQLS…QALT) and 87 to 107 (YAET…ERVM). A 10 X approximate tandem repeats region spans residues 64–262 (LQLSESLTKL…YETIAKAIQA (199 aa)). One copy of the 3; half-length repeat lies at 108–118 (TDVEDLRSKLE). 5 repeat units span residues 119–140 (PHRA…EKLE), 141–162 (PVFQ…AKLE), 163–184 (PLMD…SKVV), 185–206 (PMVE…TMAA), and 207–228 (PYAE…EKIA). One copy of the 9; half-length repeat lies at 229–239 (PHTQDLQTRME). The stretch at 240–262 (PYMENVRTTFAQMYETIAKAIQA) is repeat 10.

Belongs to the apolipoprotein A1/A4/E family. Homodimer. Interacts with naxe and yjefn3.

Its subcellular location is the secreted. Functionally, participates in the reverse transport of cholesterol from tissues to the liver for excretion by promoting cholesterol efflux from tissues and by acting as a cofactor for the lecithin cholesterol acyltransferase (LCAT). The chain is Apolipoprotein A-Ia from Danio rerio (Zebrafish).